Consider the following 419-residue polypeptide: eIF5-mimic protein 2-A (419 aa).

Residues 1-15 show a composition bias toward polar residues; the sequence is MNNQKQQKPTLTGQR. The segment at 1–29 is disordered; it reads MNNQKQQKPTLTGQRFKTRKRDEKERFDP. The W2 domain occupies 247-414; that stretch reads NQQSIGARKE…KNAEEESESE (168 aa).

This sequence belongs to the BZW family.

In terms of biological role, translation initiation regulator which may repress repeat-associated non-AUG (RAN) initiated translation probably by acting as a competitive inhibitor of eukaryotic translation initiation factor 5 (EIF5) function. Enhances histone H4 gene transcription but does not seem to bind DNA directly. This is eIF5-mimic protein 2-A (bzw1a) from Danio rerio (Zebrafish).